A 476-amino-acid polypeptide reads, in one-letter code: Stromelysin-2 (476 aa).

Positions 1-17 are cleaved as a signal peptide; that stretch reads MEPLAILVLLCFPICSA. Positions 18–99 are cleaved as a propeptide — activation peptide; it reads YPLHGAVRQD…PRCGVPDVGG (82 aa). Positions 90-97 match the Cysteine switch motif; that stretch reads PRCGVPDV. The Zn(2+) site is built by Cys-92, His-168, Asp-170, His-183, His-196, and His-218. Residue Glu-219 is part of the active site. Positions 222 and 228 each coordinate Zn(2+). Hemopexin repeat units lie at residues 286 to 335, 336 to 382, 384 to 432, and 433 to 476; these read PVKC…WPSL, PSGL…GFPP, VKKI…FPGI, and EPQV…WLLC. The cysteines at positions 289 and 476 are disulfide-linked.

It belongs to the peptidase M10A family. The cofactor is Zn(2+). Ca(2+) serves as cofactor.

The protein localises to the secreted. The protein resides in the extracellular space. It is found in the extracellular matrix. The enzyme catalyses Similar to stromelysin 1, but action on collagen types III, IV and V is weak.. Can degrade fibronectin, gelatins of type I, III, IV, and V; weakly collagens III, IV, and V. Activates procollagenase. This chain is Stromelysin-2 (Mmp10), found in Rattus norvegicus (Rat).